The sequence spans 699 residues: 1,4-alpha-glucan-branching enzyme (699 aa).

Residues 59-60 (NE) and 88-90 (WAP) each bind substrate. Residue tryptophan 104 coordinates (1,4-alpha-D-glucosyl)n. 115 to 118 (DYGK) serves as a coordination point for substrate. Lysine 140 contributes to the (1,4-alpha-D-glucosyl)n binding site. Tyrosine 170 is subject to Phosphotyrosine. Residue 330–333 (EVLR) coordinates substrate. Residue aspartate 354 is the Nucleophile of the active site. Residue glutamate 409 is the Proton donor of the active site.

This sequence belongs to the glycosyl hydrolase 13 family. GlgB subfamily. As to quaternary structure, monomer.

It carries out the reaction Transfers a segment of a (1-&gt;4)-alpha-D-glucan chain to a primary hydroxy group in a similar glucan chain.. The protein operates within glycan biosynthesis; glycogen biosynthesis. Functionally, glycogen-branching enzyme participates in the glycogen biosynthetic process along with glycogenin and glycogen synthase. Generates alpha-1,6-glucosidic branches from alpha-1,4-linked glucose chains, to increase solubility of the glycogen polymer. The chain is 1,4-alpha-glucan-branching enzyme (GBE1) from Equus caballus (Horse).